The primary structure comprises 570 residues: Eukaryotic translation initiation factor 2A (570 aa).

WD repeat units follow at residues 274-316 (EKKG…FDTI) and 318-358 (GPRN…EIIS). Positions 468-526 (PPHLRKPLGGGGSAGPPSAAAPTPGNQNQRPAQPRANGNGNAPQPFRPQQSEQERKAFQ) are disordered. Low complexity predominate over residues 482-492 (GPPSAAAPTPG). The span at 493-518 (NQNQRPAQPRANGNGNAPQPFRPQQS) shows a compositional bias: polar residues. Positions 519 to 541 (EQERKAFQLKKKVEEIKVLKQRV) form a coiled coil.

Belongs to the WD repeat EIF2A family.

Its function is as follows. Functions in the early steps of protein synthesis of a small number of specific mRNAs. Acts by directing the binding of methionyl-tRNAi to 40S ribosomal subunits. In contrast to the eIF-2 complex, it binds methionyl-tRNAi to 40S subunits in a codon-dependent manner, whereas the eIF-2 complex binds methionyl-tRNAi to 40S subunits in a GTP-dependent manner. The protein is Eukaryotic translation initiation factor 2A of Caenorhabditis elegans.